A 64-amino-acid chain; its full sequence is MAQEQTKRTGGGDEDDTPGGDGAAGQERREKLAEDTDDLLDEIDDVLEENAEDFVRAYVQKGGQ.

A compositionally biased stretch (basic and acidic residues) spans 1-11; it reads MAQEQTKRTGG. Residues 1–38 are disordered; it reads MAQEQTKRTGGGDEDDTPGGDGAAGQERREKLAEDTDD. The ARC ATPase binding stretch occupies residues 21–58; sequence DGAAGQERREKLAEDTDDLLDEIDDVLEENAEDFVRAY. Positions 24 to 52 form a coiled coil; it reads AGQERREKLAEDTDDLLDEIDDVLEENAE. A Deamidated glutamine modification is found at Gln64. An Isoglutamyl lysine isopeptide (Gln-Lys) (interchain with K-? in acceptor proteins) cross-link involves residue Gln64.

The protein belongs to the prokaryotic ubiquitin-like protein family. As to quaternary structure, strongly interacts with the proteasome-associated ATPase ARC through a hydrophobic interface; the interacting region of Pup lies in its C-terminal half. There is one Pup binding site per ARC hexamer ring. In terms of processing, is modified by deamidation of its C-terminal glutamine to glutamate by the deamidase Dop, a prerequisite to the subsequent pupylation process.

The protein operates within protein degradation; proteasomal Pup-dependent pathway. Functionally, protein modifier that is covalently attached to lysine residues of substrate proteins, thereby targeting them for proteasomal degradation. The tagging system is termed pupylation. The protein is Prokaryotic ubiquitin-like protein Pup of Rhodococcus opacus (strain B4).